The sequence spans 158 residues: Nuclear cap-binding protein subunit 2 (158 aa).

MRNA is bound by residues Y17, Y40, 109–113 (RADWD), 120–124 (RQYGR), and 130–131 (QV). An RRM domain is found at 37-115 (CTLYVGNLSY…RVIRADWDAG (79 aa)). Residues 123-158 (GRGKHGGQVRDEYRKDYDPERGGYNRAIAQKGGDRQ) are disordered. The segment covering 130–145 (QVRDEYRKDYDPERGG) has biased composition (basic and acidic residues).

This sequence belongs to the RRM NCBP2 family. As to quaternary structure, component of the nuclear cap-binding complex (CBC), a heterodimer composed of ncbp-1 and ncbp-2 that interacts with m7GpppG-capped RNA.

The protein resides in the nucleus. In terms of biological role, component of the cap-binding complex (CBC), which binds co-transcriptionally to the 5' cap of pre-mRNAs and is involved in various processes such as pre-mRNA splicing and RNA-mediated gene silencing (RNAi). The CBC complex is involved in miRNA-mediated RNA interference and is required for primary microRNAs (miRNAs) processing. In the CBC complex, ncbp-2 recognizes and binds capped RNAs (m7GpppG-capped RNA) but requires ncbp-1 to stabilize the movement of its N-terminal loop and lock the CBC into a high affinity cap-binding state with the cap structure. This chain is Nuclear cap-binding protein subunit 2 (ncbp-2), found in Caenorhabditis elegans.